Consider the following 677-residue polypeptide: Envelope glycoprotein (677 aa).

The first 33 residues, 1-33 (MGSGYQLLQLPRERFRKTSFLVWVIILFQRAIS), serve as a signal peptide directing secretion. Topologically, residues 34-651 (MPLGIVTNST…DLNLWTGWRQ (618 aa)) are extracellular. Residue N41 is glycosylated (N-linked (GlcNAc...) asparagine; by host). 5 cysteine pairs are disulfide-bonded: C54/C610, C109/C136, C122/C148, C512/C557, and C602/C609. The interval 55–202 (RDKLSSTSQL…HFWKATPAHE (148 aa)) is receptor-binding. Residues N205, N239, N258, N269, N297, N317, N318, N339, N406, N420, N435, and N463 are each glycosylated (N-linked (GlcNAc...) asparagine; by host). The tract at residues 306 to 486 (NLHFQILSTH…PSQPGFTINT (181 aa)) is mucin-like region. Over residues 315–326 (HTNNSSDQSPAG) the composition is skewed to polar residues. 3 disordered regions span residues 315-349 (HTNN…TDSP), 370-482 (NGET…QPGF), and 489-508 (KVAD…RQNT). 2 stretches are compositionally biased toward polar residues: residues 370–421 (NGET…ASNE) and 429–472 (NPIQ…TSPG). The interval 525-540 (GAAVGLAWIPYFGPAA) is fusion peptide. Positions 555 to 596 (LICGLRQLANETTQALQLFLRATTELRTYSLLNRKAIDFLLQ) form a coiled coil. N-linked (GlcNAc...) asparagine; by host glycosylation occurs at N564. The stretch at 616 to 635 (WTKNITDEINQIKHDFIDNP) forms a coiled coil. Residue N619 is glycosylated (N-linked (GlcNAc...) asparagine; by host). A helical transmembrane segment spans residues 652–672 (WIPAGIGIIGVIIAIIALLCI). Residues C671 and C673 are each lipidated (S-palmitoyl cysteine; by host). At 673 to 677 (CKILC) the chain is on the cytoplasmic side.

The protein belongs to the filoviruses glycoprotein family. Homotrimer; each monomer consists of a GP1 and a GP2 subunit linked by disulfide bonds. The resulting peplomers (GP1,2) protrude from the virus surface as spikes. Interacts with host integrin alpha-V/ITGAV. Interacts with host CLEC10A. Binds also to host CD209 and CLEC4M/DC-SIGN(R). Interacts with host FOLR1. Interacts with BST2; this interaction inhibits the antiviral effect of BST2 and this allows viral release from infected cells. Interacts with host FCN1; this interaction enhances viral entry. Interacts with host TLR4; this interaction induces cell death in T-lymphocytes or proinflammatory cytokines and SOCS1 production in monocytes. In terms of assembly, interacts with host entry receptor NPC1. As to quaternary structure, GP1 and GP2delta are part of GP1,2delta soluble complexes released by ectodomain shedding. Post-translationally, the signal peptide region modulates GP's high mannose glycosylation, thereby determining the efficiency of the interactions with DC-SIGN(R). N-glycosylated. In terms of processing, O-glycosylated in the mucin-like region. Post-translationally, palmitoylation of GP2 is not required for its function. Specific enzymatic cleavages in vivo yield mature proteins. The precursor is processed into GP1 and GP2 by host cell furin in the trans Golgi, and maybe by other host proteases, to yield the mature GP1 and GP2 proteins. The cleavage site corresponds to the furin optimal cleavage sequence [KR]-X-[KR]-R. This cleavage does not seem to be required for function. After the internalization of the virus into cell endosomes, GP1 C-terminus is removed by the endosomal proteases cathepsin B, cathepsin L, or both, leaving a 19-kDa N-terminal fragment which is further digested by cathepsin B. Proteolytic processing of GP1,2 by host ADAM17 can remove the transmembrane anchor of GP2 and leads to shedding of complexes consisting in GP1 and truncated GP2 (GP1,2delta).

It localises to the virion membrane. The protein resides in the host cell membrane. The protein localises to the secreted. Its function is as follows. Trimeric GP1,2 complexes form the virion surface spikes and mediate the viral entry processes, with GP1 acting as the receptor-binding subunit and GP2 as the membrane fusion subunit. At later times of infection, down-regulates the expression of various host cell surface molecules that are essential for immune surveillance and cell adhesion. Down-modulates several integrins including ITGA1, ITGA2, ITGA3, ITGA4, ITGA5, ITGA6, ITGAV and ITGB1. This decrease in cell adhesion molecules may lead to cell detachment, contributing to the disruption of blood vessel integrity and hemorrhages developed during infection (cytotoxicity). Interacts with host TLR4 and thereby stimulates the differentiation and activation of monocytes leading to bystander death of T-lymphocytes. Down-regulates as well the function of host natural killer cells. Counteracts the antiviral effect of host BST2/tetherin that restricts release of progeny virions from infected cells. However, cooperates with VP40 and host BST2 to activate canonical NF-kappa-B pathway in a manner dependent on neddylation. Functionally, functions as a decoy for anti-GP1,2 antibodies thereby contributing to viral immune evasion. Interacts and activates host macrophages and dendritic cells inducing up-regulation of cytokine transcription. This effect is mediated throught activation of host TLR4. Responsible for binding to the receptor(s) on target cells. Interacts with CD209/DC-SIGN and CLEC4M/DC-SIGNR which act as cofactors for virus entry into dendritic cells (DCs) and endothelial cells. Binding to the macrophage specific lectin CLEC10A also seems to enhance virus infectivity. Interaction with FOLR1/folate receptor alpha may be a cofactor for virus entry in some cell types, although results are contradictory. Members of the Tyro3 receptor tyrosine kinase family also seem to be cell entry factors in filovirus infection. Once attached, the virions are internalized through clathrin-dependent endocytosis and/or macropinocytosis. After internalization of the virus into the endosomes of the host cell, proteolysis of GP1 by two cysteine proteases, CTSB/cathepsin B and CTSL/cathepsin L removes the glycan cap and allows GP1 binding to the host entry receptor NPC1. NPC1-binding, Ca(2+) and acidic pH induce a conformational change of GP2, which unmasks its fusion peptide and permit membranes fusion. In terms of biological role, acts as a class I viral fusion protein. Under the current model, the protein has at least 3 conformational states: pre-fusion native state, pre-hairpin intermediate state, and post-fusion hairpin state. During viral and target cell membrane fusion, the coiled coil regions (heptad repeats) assume a trimer-of-hairpins structure, positioning the fusion peptide in close proximity to the C-terminal region of the ectodomain. The formation of this structure appears to drive apposition and subsequent fusion of viral and target cell membranes. Responsible for penetration of the virus into the cell cytoplasm by mediating the fusion of the membrane of the endocytosed virus particle with the endosomal membrane. Low pH in endosomes induces an irreversible conformational change in GP2, releasing the fusion hydrophobic peptide. The protein is Envelope glycoprotein (GP) of Homo sapiens (Human).